Consider the following 446-residue polypeptide: Alkylglycerol monooxygenase (446 aa).

Helical transmembrane passes span 43–63 (ATVY…AWKG) and 110–130 (WDSP…YYWF). The region spanning 118 to 248 (LTFLGVDFGY…LIIWDRMFGT (131 aa)) is the Fatty acid hydroxylase domain. A Histidine box-1 motif is present at residues 131 to 135 (HRMAH). The Histidine box-2 signature appears at 144 to 148 (HQTHH). A helical transmembrane segment spans residues 167-187 (YFSWMFYWPMAFCIPPSVFAV). The short motif at 220–224 (HRVHH) is the Histidine box-3 element. 3 helical membrane-spanning segments follow: residues 339 to 359 (MMHF…KLIL), 362 to 382 (ATLL…GFIF), and 412 to 434 (VPYL…GLKA).

Belongs to the sterol desaturase family. TMEM195 subfamily. Fe cation serves as cofactor.

Its subcellular location is the endoplasmic reticulum membrane. The catalysed reaction is 1-O-(1,2-saturated-alkyl)-sn-glycerol + (6R)-L-erythro-5,6,7,8-tetrahydrobiopterin + O2 = a 1-(1-hydroxyalkyl)-sn-glycerol + (6R)-L-erythro-6,7-dihydrobiopterin + H2O. Its function is as follows. Glyceryl-ether monooxygenase that cleaves the O-alkyl bond of ether lipids. Ether lipids are essential components of brain membranes. The sequence is that of Alkylglycerol monooxygenase (agmo) from Xenopus tropicalis (Western clawed frog).